A 340-amino-acid chain; its full sequence is S-adenosylmethionine:tRNA ribosyltransferase-isomerase (340 aa).

This sequence belongs to the QueA family. In terms of assembly, monomer.

It is found in the cytoplasm. The catalysed reaction is 7-aminomethyl-7-carbaguanosine(34) in tRNA + S-adenosyl-L-methionine = epoxyqueuosine(34) in tRNA + adenine + L-methionine + 2 H(+). It participates in tRNA modification; tRNA-queuosine biosynthesis. Functionally, transfers and isomerizes the ribose moiety from AdoMet to the 7-aminomethyl group of 7-deazaguanine (preQ1-tRNA) to give epoxyqueuosine (oQ-tRNA). This is S-adenosylmethionine:tRNA ribosyltransferase-isomerase from Francisella tularensis subsp. holarctica (strain OSU18).